A 232-amino-acid chain; its full sequence is Large ribosomal subunit protein uL1 (232 aa).

The protein belongs to the universal ribosomal protein uL1 family. As to quaternary structure, part of the 50S ribosomal subunit.

Binds directly to 23S rRNA. The L1 stalk is quite mobile in the ribosome, and is involved in E site tRNA release. Its function is as follows. Protein L1 is also a translational repressor protein, it controls the translation of the L11 operon by binding to its mRNA. The polypeptide is Large ribosomal subunit protein uL1 (Roseobacter denitrificans (strain ATCC 33942 / OCh 114) (Erythrobacter sp. (strain OCh 114))).